We begin with the raw amino-acid sequence, 469 residues long: Uridine kinase-like protein 4 (469 aa).

Residues 46 to 249 form a uridine kinase region; sequence QRQPFVIGVA…IVQHICTKLG (204 aa). Residues 259–469 are uracil phosphoribosyltransferase; the sequence is NLYVIHSTFQ…GDRYFGTDDD (211 aa). GTP contacts are provided by residues Lys283, Arg292, and 326-329; that span reads CKRL. 5-phospho-alpha-D-ribose 1-diphosphate-binding residues include Arg336 and Arg361. Residue Arg381 coordinates GTP. 5-phospho-alpha-D-ribose 1-diphosphate-binding positions include Asp387, 392-395, and Glu458; that span reads TGNS. 457–459 contacts uracil; that stretch reads GEF.

This sequence in the N-terminal section; belongs to the uridine kinase family. The protein in the C-terminal section; belongs to the UPRTase family. The cofactor is Mg(2+).

It carries out the reaction UMP + diphosphate = 5-phospho-alpha-D-ribose 1-diphosphate + uracil. It catalyses the reaction cytidine + ATP = CMP + ADP + H(+). The enzyme catalyses uridine + ATP = UMP + ADP + H(+). It participates in pyrimidine metabolism; UMP biosynthesis via salvage pathway; UMP from uracil: step 1/1. The protein operates within pyrimidine metabolism; CTP biosynthesis via salvage pathway; CTP from cytidine: step 1/3. Its pathway is pyrimidine metabolism; UMP biosynthesis via salvage pathway; UMP from uridine: step 1/1. With respect to regulation, allosterically activated by GTP. Involved in the pyrimidine salvage pathway. The uracil phosphoribosyltransferase (UPRT) activity, that catalyzes the conversion of uracil and 5-phospho-alpha-D-ribose 1-diphosphate (PRPP) to UMP and diphosphate, is unsure. The polypeptide is Uridine kinase-like protein 4 (UKL4) (Arabidopsis thaliana (Mouse-ear cress)).